A 682-amino-acid polypeptide reads, in one-letter code: Homeobox-leucine zipper protein HDG7 (682 aa).

Positions 33-65 (LSDDSFDAMSGDEDKQEQRPKKKKRKTKYHRHT) are disordered. Basic residues predominate over residues 52-65 (PKKKKRKTKYHRHT). The segment at residues 57–116 (RKTKYHRHTSYQIQELESFFKECPHPNEKQRLELGKKLTLESKQIKFWFQNRRTQMKTQL) is a DNA-binding region (homeobox). Residues 105 to 186 (FQNRRTQMKT…LDRICALANR (82 aa)) are a coiled coil. The region spanning 214 to 429 (SGGTSLMFMD…LQRQCESFTM (216 aa)) is the START domain.

Belongs to the HD-ZIP homeobox family. Class IV subfamily. As to quaternary structure, interacts with AIL7/PLT7. As to expression, expressed in cells around the base of leaf primordia, in the outermost 2 to 3 cell layers along the boundary between two leaf primordia. Expressed in lateral root primordia and tips, and in the epidermal boundaries of two cotyledons at heart-stage embryo.

It localises to the nucleus. In terms of biological role, probable transcription factor that binds to the DNA sequence 5'-GCATTAAATGC-3'. Seems to promote cell differentiation. This Arabidopsis thaliana (Mouse-ear cress) protein is Homeobox-leucine zipper protein HDG7.